Consider the following 146-residue polypeptide: Transmembrane protein 207 (146 aa).

Residues 1–29 (MSRSRLFSVTSAISTIGILCLPLFQLVLS) form the signal peptide. A helical transmembrane segment spans residues 52 to 72 (IWILLLLVLVAALLCGAVVLC).

As to quaternary structure, interacts with WWOX. Expressed in some signet-ring cell carcinoma, especially those showing high invasion and metastatic activity (at protein level).

It is found in the membrane. This Homo sapiens (Human) protein is Transmembrane protein 207 (TMEM207).